The sequence spans 255 residues: Ribosomal RNA small subunit methyltransferase A (255 aa).

6 residues coordinate S-adenosyl-L-methionine: His12, Leu14, Gly39, Glu60, Asp81, and Asn103.

Belongs to the class I-like SAM-binding methyltransferase superfamily. rRNA adenine N(6)-methyltransferase family. RsmA subfamily.

The protein localises to the cytoplasm. It carries out the reaction adenosine(1518)/adenosine(1519) in 16S rRNA + 4 S-adenosyl-L-methionine = N(6)-dimethyladenosine(1518)/N(6)-dimethyladenosine(1519) in 16S rRNA + 4 S-adenosyl-L-homocysteine + 4 H(+). Its function is as follows. Specifically dimethylates two adjacent adenosines (A1518 and A1519) in the loop of a conserved hairpin near the 3'-end of 16S rRNA in the 30S particle. May play a critical role in biogenesis of 30S subunits. The polypeptide is Ribosomal RNA small subunit methyltransferase A (Variovorax paradoxus (strain S110)).